The chain runs to 390 residues: Peroxisomal sarcosine oxidase (390 aa).

9–39 (DAIVIGAGIQGCFTAYHLAKHRKRILLLEQF) contributes to the FAD binding site. Lys126 is modified (N6-acetyllysine). The residue at position 319 (Cys319) is an S-8alpha-FAD cysteine. The Microbody targeting signal signature appears at 388–390 (AHL).

It belongs to the MSOX/MTOX family. FAD serves as cofactor. Expressed in the liver and kidney.

Its subcellular location is the peroxisome. It catalyses the reaction sarcosine + O2 + H2O = formaldehyde + glycine + H2O2. The catalysed reaction is L-pipecolate + O2 = L-1-piperideine-6-carboxylate + H2O2 + H(+). Its function is as follows. Metabolizes sarcosine and L-pipecolic acid. The chain is Peroxisomal sarcosine oxidase (PIPOX) from Homo sapiens (Human).